Reading from the N-terminus, the 471-residue chain is 6-phosphofructo-2-kinase/fructose-2,6-bisphosphatase 1 (471 aa).

Serine 2 is modified (N-acetylserine). The 6-phosphofructo-2-kinase stretch occupies residues 2–250; that stretch reads SREMGELTQT…AYYLMNIHVT (249 aa). Residue serine 33 is modified to Phosphoserine; by PKA. Position 49–57 (49–57) interacts with ATP; sequence GLPARGKTY. Beta-D-fructose 6-phosphate is bound by residues arginine 82 and arginine 105. The active site involves aspartate 131. Residues threonine 133 and arginine 139 each coordinate beta-D-fructose 6-phosphate. At serine 141 the chain carries Phosphoserine. Cysteine 161 is a catalytic residue. 170-175 is a binding site for ATP; it reads NIKQVK. 3 residues coordinate beta-D-fructose 6-phosphate: lysine 175, arginine 196, and tyrosine 200. The segment at 251–471 is fructose-2,6-bisphosphatase; the sequence is PRSIYLCRHG…EALDTVPAHY (221 aa). Arginine 258 provides a ligand contact to beta-D-fructose 2,6-bisphosphate. Histidine 259 acts as the Tele-phosphohistidine intermediate in catalysis. Beta-D-fructose 2,6-bisphosphate contacts are provided by asparagine 265, glycine 271, and arginine 308. The Proton donor/acceptor role is filled by glutamate 328. Beta-D-fructose 2,6-bisphosphate is bound by residues tyrosine 339, arginine 353, lysine 357, tyrosine 368, glutamine 394, and arginine 398. Position 350–353 (350–353) interacts with ATP; that stretch reads FALR. Residues 394–398 and tyrosine 430 contribute to the ATP site; that span reads QAVMR.

In the C-terminal section; belongs to the phosphoglycerate mutase family. As to quaternary structure, homodimer. In terms of tissue distribution, liver.

The enzyme catalyses beta-D-fructose 2,6-bisphosphate + H2O = beta-D-fructose 6-phosphate + phosphate. The catalysed reaction is beta-D-fructose 6-phosphate + ATP = beta-D-fructose 2,6-bisphosphate + ADP + H(+). Its activity is regulated as follows. Phosphorylation at Ser-33 inhibits the kinase and activates the bisphosphatase. Synthesis and degradation of fructose 2,6-bisphosphate. The sequence is that of 6-phosphofructo-2-kinase/fructose-2,6-bisphosphatase 1 from Mus musculus (Mouse).